Here is a 165-residue protein sequence, read N- to C-terminus: UPF0254 protein MmarC6_1720 (165 aa).

The protein belongs to the UPF0254 family.

This is UPF0254 protein MmarC6_1720 from Methanococcus maripaludis (strain C6 / ATCC BAA-1332).